Here is a 182-residue protein sequence, read N- to C-terminus: Prorelaxin (182 aa).

The first 25 residues, 1 to 25, serve as a signal peptide directing secretion; it reads MRRLFLSHVLGAWLLLSQLPRELSG. Glutamine 26 carries the post-translational modification Pyrrolidone carboxylic acid. Cystine bridges form between cysteine 35–cysteine 169, cysteine 47–cysteine 182, and cysteine 168–cysteine 173. The propeptide at 54–156 is connecting peptide; the sequence is KTVLRLEEPG…LKNLGLDKHS (103 aa). Residues 161–162 constitute a propeptide that is removed on maturation; sequence MI. Glutamine 163 is subject to Pyrrolidone carboxylic acid.

Belongs to the insulin family. Heterodimer of a B chain and an A chain linked by two disulfide bonds.

It is found in the secreted. In terms of biological role, relaxin is an ovarian hormone that acts with estrogen to produce dilatation of the birth canal in many mammals. This Equus caballus (Horse) protein is Prorelaxin (RLN).